The sequence spans 108 residues: Putative bolA-like protein K11H12.1 (108 aa).

The segment at 89-108 is disordered; the sequence is SKWDGQKQEDSPTCRGGFGK.

This sequence belongs to the BolA/IbaG family.

The sequence is that of Putative bolA-like protein K11H12.1 from Caenorhabditis elegans.